The chain runs to 398 residues: MATPPLVPLLLLLLLLLPHAHHRLALRSVLATQRAQDSPAVHLINGLGQEPIQVLTFDLTRLVKASSSFELRTWDSEGVIFYGDTSPKDDWFMLGLRDGRPEIQMHNPWAQLTVGAGPRLDDGSWHQVHVKIRGDSVLLEVDGKEVLRLSQVSGTLHDKPQPVMKLAVGGLLFPPSSLRLPLVPALDGCLRRGSWLDPQAQISASAHASRRSCDVELQPGIFFPPGTHAEFSLQDIPQPQTEPWAFSLDLELKPSEGSGRLLALGTPEDPNWLSLHLQDQKVVLSSGMEPGLDLPLAWGLPLQLKLGVSTAVLSQGSKKQALGLPPSGLGPLLNLWAQPQGRLFLGALPGEDSSASFCLDGLWAQGQKLDMDKALNRSQDIWTHSCPSSPGNGTDTSH.

The N-terminal stretch at 1 to 31 is a signal peptide; sequence MATPPLVPLLLLLLLLLPHAHHRLALRSVLA. 2 Laminin G-like domains span residues 41 to 213 and 220 to 386; these read VHLI…RRSC and GIFF…THSC. 2 cysteine pairs are disulfide-bonded: cysteine 189/cysteine 213 and cysteine 358/cysteine 386. Asparagine 376 and asparagine 392 each carry an N-linked (GlcNAc...) asparagine glycan.

Homodimer.

It is found in the secreted. Functionally, functions as an androgen transport protein, but may also be involved in receptor mediated processes. Each dimer binds one molecule of steroid. Specific for 5-alpha-dihydrotestosterone, testosterone, and 17-beta-estradiol. Regulates the plasma metabolic clearance rate of steroid hormones by controlling their plasma concentration. The chain is Sex hormone-binding globulin (SHBG) from Oryctolagus cuniculus (Rabbit).